The primary structure comprises 302 residues: N-acetylmuramic acid 6-phosphate etherase (302 aa).

One can recognise an SIS domain in the interval 58–221; the sequence is IGEAFLNGGR…STGAMVKTGK (164 aa). The Proton donor role is filled by glutamate 86. Glutamate 117 is an active-site residue.

The protein belongs to the GCKR-like family. MurNAc-6-P etherase subfamily. As to quaternary structure, homodimer.

The enzyme catalyses N-acetyl-D-muramate 6-phosphate + H2O = N-acetyl-D-glucosamine 6-phosphate + (R)-lactate. Its pathway is amino-sugar metabolism; N-acetylmuramate degradation. Functionally, specifically catalyzes the cleavage of the D-lactyl ether substituent of MurNAc 6-phosphate, producing GlcNAc 6-phosphate and D-lactate. This is N-acetylmuramic acid 6-phosphate etherase from Clostridium botulinum (strain Hall / ATCC 3502 / NCTC 13319 / Type A).